We begin with the raw amino-acid sequence, 277 residues long: RsbT co-antagonist protein RsbRB (277 aa).

In terms of domain architecture, STAS spans 165 to 276 (SSPVITLSKS…TNLAQALNYH (112 aa)). The residue at position 186 (Thr186) is a Phosphothreonine.

In terms of assembly, interacts with RsbRA and RsbS in the stressosome. The stressosome probably also contains RsbRC and RsbRD. Post-translationally, phosphorylated by RsbT.

Its function is as follows. One of 4 functionally non-identical RsbR paralogs, it functions in the environmental signaling branch of the general stress response. Negative regulator of sigma-B activity. Non-phosphorylated RsbS binds to RsbT, preventing its association with RsbU. Requires any one of RsbRA, RsbRB, RsbRC or RsbRD to sequester RsbT. When RsbS and the RsbR paralog(s) are phosphorylated, they release RsbT, which can then bind and activate RsbU. This chain is RsbT co-antagonist protein RsbRB (rsbRB), found in Bacillus subtilis (strain 168).